Consider the following 172-residue polypeptide: RNA pyrophosphohydrolase (172 aa).

Positions 6–149 constitute a Nudix hydrolase domain; it reads GYRLNVGIVI…KRDVYRRAMK (144 aa). The short motif at 38-59 is the Nudix box element; the sequence is GGIDDGETPEQAMFRELYEEVG.

This sequence belongs to the Nudix hydrolase family. RppH subfamily. A divalent metal cation serves as cofactor.

In terms of biological role, accelerates the degradation of transcripts by removing pyrophosphate from the 5'-end of triphosphorylated RNA, leading to a more labile monophosphorylated state that can stimulate subsequent ribonuclease cleavage. This chain is RNA pyrophosphohydrolase, found in Vibrio vulnificus (strain CMCP6).